Here is a 1147-residue protein sequence, read N- to C-terminus: Myosin heavy chain IB (1147 aa).

The Myosin motor domain maps to 9–677; that stretch reads RGVDDLVLMP…TLFHLEECLD (669 aa). ATP is bound at residue 103–110; the sequence is GESGAGKT. Residue Ser-315 is modified to Phosphoserine. An actin-binding region spans residues 551–573; sequence CDALMEALSRCSPHYIRCIKPND. The TH1 domain occupies 715–900; the sequence is KERQRHSVNR…RANIQIGIAT (186 aa). Disordered regions lie at residues 901 to 954 and 969 to 1089; these read GLPK…YSQP and AAVP…APAA. Gly residues-rich tracts occupy residues 916–951 and 975–1079; these read SGGGGGYGGGRGGGGGGRGAAGGGRGGFGGGGGGGY and GRGG…GAGR. In terms of domain architecture, SH3 spans 1090–1147; the sequence is PAKPQVKALYDYDAQTGDELTFKEGDTIIVHQKDPAGWWEGELNGKRGWVPANYVQDI.

The protein belongs to the TRAFAC class myosin-kinesin ATPase superfamily. Myosin family. As to quaternary structure, myosin I heavy chain is single-headed. Dimer of a heavy and a light chain. Inability to self-assemble into filaments.

Myosin is a protein that binds to F-actin and has ATPase activity that is activated by F-actin. This is Myosin heavy chain IB (MIB) from Acanthamoeba castellanii (Amoeba).